The chain runs to 396 residues: Stearoyl-[acyl-carrier-protein] 9-desaturase 5, chloroplastic (396 aa).

Residues 1 to 29 constitute a chloroplast transit peptide; the sequence is MAMAMDRIVFSPSSYVYRPCQARGSRSSR. Residues Glu-137, Glu-175, His-178, Glu-228, Glu-261, and His-264 each contribute to the Fe cation site.

Belongs to the fatty acid desaturase type 2 family. As to quaternary structure, homodimer. It depends on Fe(2+) as a cofactor. In terms of tissue distribution, ubiquitously expressed with a preference in leaves, flowers and stems.

The protein localises to the plastid. The protein resides in the chloroplast stroma. It carries out the reaction octadecanoyl-[ACP] + 2 reduced [2Fe-2S]-[ferredoxin] + O2 + 2 H(+) = (9Z)-octadecenoyl-[ACP] + 2 oxidized [2Fe-2S]-[ferredoxin] + 2 H2O. Its pathway is lipid metabolism; fatty acid metabolism. Functionally, converts stearoyl-ACP to oleoyl-ACP by introduction of a cis double bond between carbons 9 and 10 of the acyl chain. This chain is Stearoyl-[acyl-carrier-protein] 9-desaturase 5, chloroplastic (S-ACP-DES5), found in Arabidopsis thaliana (Mouse-ear cress).